Consider the following 329-residue polypeptide: UDP-N-acetylenolpyruvoylglucosamine reductase (329 aa).

One can recognise an FAD-binding PCMH-type domain in the interval Arg-28 to Gly-192. The active site involves Arg-172. The segment at Asp-204–Asn-225 is disordered. Ser-221 functions as the Proton donor in the catalytic mechanism. The active site involves Glu-291. A disordered region spans residues Leu-303–Thr-329. Residues Ala-311 to Ser-320 are compositionally biased toward gly residues.

This sequence belongs to the MurB family. FAD serves as cofactor.

The protein localises to the cytoplasm. It carries out the reaction UDP-N-acetyl-alpha-D-muramate + NADP(+) = UDP-N-acetyl-3-O-(1-carboxyvinyl)-alpha-D-glucosamine + NADPH + H(+). It functions in the pathway cell wall biogenesis; peptidoglycan biosynthesis. Its function is as follows. Cell wall formation. This chain is UDP-N-acetylenolpyruvoylglucosamine reductase, found in Anaeromyxobacter dehalogenans (strain 2CP-C).